The sequence spans 1093 residues: Error-prone DNA polymerase (1093 aa).

Positions 1–55 are disordered; that stretch reads MGWFNGPPSWAEMERVLDSKPRRAGESAAPEPDGPLSRGRATYRPPDEGRAARSS. The span at 12–25 shows a compositional bias: basic and acidic residues; that stretch reads EMERVLDSKPRRAG.

It belongs to the DNA polymerase type-C family. DnaE2 subfamily.

Its subcellular location is the cytoplasm. The enzyme catalyses DNA(n) + a 2'-deoxyribonucleoside 5'-triphosphate = DNA(n+1) + diphosphate. Functionally, DNA polymerase involved in damage-induced mutagenesis and translesion synthesis (TLS). It is not the major replicative DNA polymerase. This Mycolicibacterium paratuberculosis (strain ATCC BAA-968 / K-10) (Mycobacterium paratuberculosis) protein is Error-prone DNA polymerase.